We begin with the raw amino-acid sequence, 328 residues long: Phosphate acyltransferase (328 aa).

This sequence belongs to the PlsX family. As to quaternary structure, homodimer. Probably interacts with PlsY.

The protein localises to the cytoplasm. The enzyme catalyses a fatty acyl-[ACP] + phosphate = an acyl phosphate + holo-[ACP]. Its pathway is lipid metabolism; phospholipid metabolism. In terms of biological role, catalyzes the reversible formation of acyl-phosphate (acyl-PO(4)) from acyl-[acyl-carrier-protein] (acyl-ACP). This enzyme utilizes acyl-ACP as fatty acyl donor, but not acyl-CoA. This chain is Phosphate acyltransferase, found in Campylobacter jejuni subsp. jejuni serotype O:2 (strain ATCC 700819 / NCTC 11168).